Here is a 250-residue protein sequence, read N- to C-terminus: Probable transcriptional regulatory protein Ppha_0657 (250 aa).

Belongs to the TACO1 family.

The protein resides in the cytoplasm. The sequence is that of Probable transcriptional regulatory protein Ppha_0657 from Pelodictyon phaeoclathratiforme (strain DSM 5477 / BU-1).